A 486-amino-acid polypeptide reads, in one-letter code: MAEFETIIGLEVHAQLNTESKIFSTSATKFGSPPNSQTNPVCLGLPGALPVLNEFALEKAIMAGLAFGCDITLFTKFDRKNYFYPDLPKGYQISQFDKPICTGGGVTFTIKGEDSARYVRLTRIHLEEDAGKLIHSADPNIPQSYVDLNRAGTPLIEIVSEPDMRSSDEAYYYLNSLKSVLKYIRVSDCNMEEGSLRCDANVSIRPKGSDKFGTRVEIKNLNSFKAVKAAIDYEVEWQKEMALEGKTFQQQTKLWDSVANKTVTMRTKEMSHDYRYFPDPDLPVIVLQKETVESVRSKLPELPNERKNRFVEKLGLPKYDAEVLTAEREVADYFEDALKVSGDAKKTSNWVKDEILGIVNKENITISEFSVSARRIGELVKLIADGKISGKIAKTVFEELLTSDKDAETIVTEKNLIVVRDDKEIERIVDEAIANNQDAVTKYKSGKDRALGAIVGYVMKVSKGKADPELVNQMLLEKLGPLPPKS.

The protein belongs to the GatB/GatE family. GatB subfamily. In terms of assembly, heterotrimer of A, B and C subunits.

It carries out the reaction L-glutamyl-tRNA(Gln) + L-glutamine + ATP + H2O = L-glutaminyl-tRNA(Gln) + L-glutamate + ADP + phosphate + H(+). It catalyses the reaction L-aspartyl-tRNA(Asn) + L-glutamine + ATP + H2O = L-asparaginyl-tRNA(Asn) + L-glutamate + ADP + phosphate + 2 H(+). Its function is as follows. Allows the formation of correctly charged Asn-tRNA(Asn) or Gln-tRNA(Gln) through the transamidation of misacylated Asp-tRNA(Asn) or Glu-tRNA(Gln) in organisms which lack either or both of asparaginyl-tRNA or glutaminyl-tRNA synthetases. The reaction takes place in the presence of glutamine and ATP through an activated phospho-Asp-tRNA(Asn) or phospho-Glu-tRNA(Gln). The chain is Aspartyl/glutamyl-tRNA(Asn/Gln) amidotransferase subunit B from Leptospira interrogans serogroup Icterohaemorrhagiae serovar Lai (strain 56601).